A 200-amino-acid chain; its full sequence is ADP-ribosylation factor-like protein 4A (200 aa).

The N-myristoyl glycine moiety is linked to residue Gly2. GTP is bound by residues 27-34, 75-79, and 134-137; these read GLDCAGKT, DVGGQ, and NKQD.

Belongs to the small GTPase superfamily. Arf family. As to quaternary structure, interacts with CYTH2. Interacts with KPNA2; the interaction is direct. Does not interact with ARL4A. In terms of processing, myristoylated.

It is found in the cell membrane. Its subcellular location is the cytoplasm. The protein resides in the nucleus. The protein localises to the nucleolus. In terms of biological role, small GTP-binding protein which cycles between an inactive GDP-bound and an active GTP-bound form, and the rate of cycling is regulated by guanine nucleotide exchange factors (GEF) and GTPase-activating proteins (GAP). GTP-binding protein that does not act as an allosteric activator of the cholera toxin catalytic subunit. Recruits CYTH1, CYTH2, CYTH3 and CYTH4 to the plasma membrane in GDP-bound form. The sequence is that of ADP-ribosylation factor-like protein 4A (ARL4A) from Homo sapiens (Human).